Reading from the N-terminus, the 99-residue chain is HTH-type transcriptional regulator YgaV (99 aa).

The HTH arsR-type domain maps to 7–99; it reads LQASAEQAAA…IATLKNVYCP (93 aa). The H-T-H motif DNA-binding region spans 41–64; sequence AGELTRITGLSASATSQHLARMRD.

In the presence of H(2)S, two cysteine residues form an intramolecular tetrasulfide bond, which attenuates the binding of YgaV to DNA. Both unmodified YgaV and sulfide-modified YgaV can probably function as either a repressor or an activator. Binds heme, which may influence the DNA-binding affinity. Its function is as follows. Transcriptional regulator that regulates large-scale gene expression in response to sulfide. May act as a global regulator responsible for redox homeostasis. It functions as both a repressor and an activator. In the absence of sulfide compounds, it negatively regulates many anaerobic respiratory genes, including formate, fumarate, lactate, nitrate and nitrite reductase genes. In the presence of hydrogen sulfide (H(2)S), YgaV activity is attenuated, leading to the expression of anaerobic respiratory and ROS scavenging genes, which contributes to redox homeostasis, reactive oxygen species (ROS) scavenging and antibiotic tolerance. It responds to H(2)O(2) scavenging and increases antibiotic tolerance under H(2)S-atmospheric conditions. It also negatively regulates its own expression by binding to the ygaVP promoter region. May also be involved in regulatory mechanisms that operate independently of sulfide. The chain is HTH-type transcriptional regulator YgaV (ygaV) from Escherichia coli (strain K12).